The chain runs to 585 residues: Zinc finger protein 496 (585 aa).

The disordered stretch occupies residues 1 to 41 (MPTALCPRVLAPKESEEPRKMRSPPGENPSPQGEPPSPESS). Residues 11-20 (APKESEEPRK) are compositionally biased toward basic and acidic residues. Lys-13 participates in a covalent cross-link: Glycyl lysine isopeptide (Lys-Gly) (interchain with G-Cter in SUMO2). The segment covering 26 to 38 (GENPSPQGEPPSP) has biased composition (pro residues). The 83-residue stretch at 42–124 (RRLFRRFRYQ…AAVEALEREP (83 aa)) folds into the SCAN box domain. Residues 141–167 (DDGDGPAAPQDLEQERMSAESQSYPDA) form a disordered region. Ser-182 is modified (phosphoserine). In terms of domain architecture, KRAB spans 220 to 294 (SPFKDMILCF…DLQDKEIPQA (75 aa)). The segment at 358–397 (SSSGDEDSQHSPYCTEELRSPPEDLHSVPAHQSNASAEGE) is disordered. The span at 373–383 (EELRSPPEDLH) shows a compositional bias: basic and acidic residues. The span at 387 to 397 (AHQSNASAEGE) shows a compositional bias: polar residues. The C2H2-type 1; degenerate zinc finger occupies 405 to 427 (YVCPNCGKIFRWRVNFIRHLRSR). 2 consecutive C2H2-type zinc fingers follow at residues 433-455 (HKCS…LETH) and 461-483 (YRCT…RRIH). The disordered stretch occupies residues 483–506 (HLQPASQQPMKKSEEEALETEGTG). Lys-494 is covalently cross-linked (Glycyl lysine isopeptide (Lys-Gly) (interchain with G-Cter in SUMO2)). 2 C2H2-type zinc fingers span residues 520 to 543 (FQCG…RHCH) and 551 to 573 (FQCR…ERLH). The Nuclear localization signal motif lies at 575–579 (KRRSK).

The protein belongs to the krueppel C2H2-type zinc-finger protein family. Interacts (via zinc-fingers) with JARID2. Interacts with NSD1.

It localises to the nucleus. DNA-binding transcription factor that can both act as an activator and a repressor. The sequence is that of Zinc finger protein 496 (Znf496) from Mus musculus (Mouse).